The primary structure comprises 262 residues: Small ribosomal subunit protein eS1 (262 aa).

This sequence belongs to the eukaryotic ribosomal protein eS1 family. As to quaternary structure, component of the small ribosomal subunit. Mature ribosomes consist of a small (40S) and a large (60S) subunit. The 40S subunit contains about 33 different proteins and 1 molecule of RNA (18S). The 60S subunit contains about 49 different proteins and 3 molecules of RNA (25S, 5.8S and 5S).

The protein resides in the cytoplasm. This Theileria annulata protein is Small ribosomal subunit protein eS1.